The primary structure comprises 334 residues: Phospholipase A1 1 (334 aa).

The first 23 residues, 1-23, serve as a signal peptide directing secretion; sequence MMNLKYLLFFCLVQALHYCYAYG. Residues 24-33 constitute a propeptide that is removed on maturation; sequence DPSLSNELDR. Cysteine 37 and cysteine 120 are disulfide-bonded. Serine 170 functions as the Nucleophile in the catalytic mechanism. Aspartate 198 acts as the Charge relay system in catalysis. 2 disulfides stabilise this stretch: cysteine 209–cysteine 214 and cysteine 252–cysteine 261. The Charge relay system role is filled by histidine 263. 3 disulfides stabilise this stretch: cysteine 278/cysteine 302, cysteine 279/cysteine 327, and cysteine 295/cysteine 300.

Belongs to the AB hydrolase superfamily. Lipase family. Post-translationally, not glycosylated. Expressed by the venom gland.

Its subcellular location is the secreted. It carries out the reaction a 1,2-diacyl-sn-glycero-3-phosphocholine + H2O = a 2-acyl-sn-glycero-3-phosphocholine + a fatty acid + H(+). Functionally, catalyzes the hydrolysis of phosphatidylcholine with phospholipase A1 activity (3.6 U/ml). May act as an allergen and induce hemolytic activity. In vivo, a mixture of this protein and Ves a 1.02 is able to paralyze crickets. The chain is Phospholipase A1 1 from Vespa affinis (Lesser banded hornet).